A 256-amino-acid chain; its full sequence is MSQSILTTRIMEALAAGRKALIPFLPGGFPDKERFFDELAALDAGGADIIEIGVPFSDPVADGPVVEQASLDCLLNGTCLSWLFYELGKRKGQYRAGLVLMGYYNPFLQYGLEQLAADAADAGVSGFIVPDVPLEESGPLREALDKHGLDLIPLVGLNTSEERLAAYAQNARGYVYFVSVLGTTGMRESLPTEVKERLTAVRRIFNVPVALGFGIKSPEQLYAFGDLVDGVVFGSALIAHIKAGGTAAEFMARWRG.

Residues E51 and D62 each act as proton acceptor in the active site.

This sequence belongs to the TrpA family. In terms of assembly, tetramer of two alpha and two beta chains.

The catalysed reaction is (1S,2R)-1-C-(indol-3-yl)glycerol 3-phosphate + L-serine = D-glyceraldehyde 3-phosphate + L-tryptophan + H2O. The protein operates within amino-acid biosynthesis; L-tryptophan biosynthesis; L-tryptophan from chorismate: step 5/5. Its function is as follows. The alpha subunit is responsible for the aldol cleavage of indoleglycerol phosphate to indole and glyceraldehyde 3-phosphate. The polypeptide is Tryptophan synthase alpha chain (Solidesulfovibrio magneticus (strain ATCC 700980 / DSM 13731 / RS-1) (Desulfovibrio magneticus)).